The primary structure comprises 546 residues: CTP synthase (546 aa).

The tract at residues 1–266 is amidoligase domain; that stretch reads MTKYIFVTGG…GDYLVERLGL (266 aa). Serine 13 serves as a coordination point for CTP. Serine 13 serves as a coordination point for UTP. 14-19 is a binding site for ATP; the sequence is SVGKGI. Residue tyrosine 54 participates in L-glutamine binding. Aspartate 71 contributes to the ATP binding site. 2 residues coordinate Mg(2+): aspartate 71 and glutamate 141. Residues 148–150, 187–192, and lysine 223 each bind CTP; these read DIE and KTKPTQ. Residues 187 to 192 and lysine 223 each bind UTP; that span reads KTKPTQ. The Glutamine amidotransferase type-1 domain occupies 291–533; the sequence is PIALVGKYVE…VAAAAQTLLA (243 aa). Glycine 353 contributes to the L-glutamine binding site. The active-site Nucleophile; for glutamine hydrolysis is the cysteine 380. L-glutamine contacts are provided by residues 381–384, glutamate 404, and arginine 461; that span reads LGMQ. Active-site residues include histidine 506 and glutamate 508.

Belongs to the CTP synthase family. As to quaternary structure, homotetramer.

The catalysed reaction is UTP + L-glutamine + ATP + H2O = CTP + L-glutamate + ADP + phosphate + 2 H(+). The enzyme catalyses L-glutamine + H2O = L-glutamate + NH4(+). It catalyses the reaction UTP + NH4(+) + ATP = CTP + ADP + phosphate + 2 H(+). Its pathway is pyrimidine metabolism; CTP biosynthesis via de novo pathway; CTP from UDP: step 2/2. Allosterically activated by GTP, when glutamine is the substrate; GTP has no effect on the reaction when ammonia is the substrate. The allosteric effector GTP functions by stabilizing the protein conformation that binds the tetrahedral intermediate(s) formed during glutamine hydrolysis. Inhibited by the product CTP, via allosteric rather than competitive inhibition. Its function is as follows. Catalyzes the ATP-dependent amination of UTP to CTP with either L-glutamine or ammonia as the source of nitrogen. Regulates intracellular CTP levels through interactions with the four ribonucleotide triphosphates. The chain is CTP synthase from Chloroflexus aurantiacus (strain ATCC 29366 / DSM 635 / J-10-fl).